We begin with the raw amino-acid sequence, 883 residues long: DNA topoisomerase 1 (883 aa).

Positions 2–126 constitute a Toprim domain; sequence PKLVIVESPT…TKRMVFHEIT (125 aa). Mg(2+)-binding residues include E8 and D95. The Topo IA-type catalytic domain occupies 141–583; it reads DQRLVHAQET…QFYRGDRGLE (443 aa). Positions 175–180 are interaction with DNA; that stretch reads SAGRVQ. The disordered stretch occupies residues 271-294; the sequence is SLEEKPTTRKPAPPFTTSTLQQES. Y320 (O-(5'-phospho-DNA)-tyrosine intermediate) is an active-site residue. A disordered region spans residues 842–883; it reads AKAGQAKAKGGRRSTGTPKSGETKARTTKTTKKTTTRRTTSR. The span at 867–883 shows a compositional bias: basic residues; the sequence is RTTKTTKKTTTRRTTSR.

It belongs to the type IA topoisomerase family. Monomer. Mg(2+) is required as a cofactor.

The enzyme catalyses ATP-independent breakage of single-stranded DNA, followed by passage and rejoining.. Its function is as follows. Releases the supercoiling and torsional tension of DNA, which is introduced during the DNA replication and transcription, by transiently cleaving and rejoining one strand of the DNA duplex. Introduces a single-strand break via transesterification at a target site in duplex DNA. The scissile phosphodiester is attacked by the catalytic tyrosine of the enzyme, resulting in the formation of a DNA-(5'-phosphotyrosyl)-enzyme intermediate and the expulsion of a 3'-OH DNA strand. The free DNA strand then undergoes passage around the unbroken strand, thus removing DNA supercoils. Finally, in the religation step, the DNA 3'-OH attacks the covalent intermediate to expel the active-site tyrosine and restore the DNA phosphodiester backbone. This chain is DNA topoisomerase 1, found in Synechococcus elongatus (strain ATCC 33912 / PCC 7942 / FACHB-805) (Anacystis nidulans R2).